A 600-amino-acid chain; its full sequence is NADH-quinone oxidoreductase subunit C/D (600 aa).

An NADH dehydrogenase I subunit C region spans residues 1–190 (MIDLMPKKNT…EPFFLNEQKE (190 aa)). The segment at 214-600 (EFMFLNLGPN…IDFVMSDVDR (387 aa)) is NADH dehydrogenase I subunit D.

In the N-terminal section; belongs to the complex I 30 kDa subunit family. It in the C-terminal section; belongs to the complex I 49 kDa subunit family. As to quaternary structure, NDH-1 is composed of 13 different subunits. Subunits NuoB, CD, E, F, and G constitute the peripheral sector of the complex.

The protein localises to the cell inner membrane. The enzyme catalyses a quinone + NADH + 5 H(+)(in) = a quinol + NAD(+) + 4 H(+)(out). In terms of biological role, NDH-1 shuttles electrons from NADH, via FMN and iron-sulfur (Fe-S) centers, to quinones in the respiratory chain. The immediate electron acceptor for the enzyme in this species is believed to be ubiquinone. Couples the redox reaction to proton translocation (for every two electrons transferred, four hydrogen ions are translocated across the cytoplasmic membrane), and thus conserves the redox energy in a proton gradient. The polypeptide is NADH-quinone oxidoreductase subunit C/D (Buchnera aphidicola subsp. Acyrthosiphon pisum (strain APS) (Acyrthosiphon pisum symbiotic bacterium)).